Consider the following 165-residue polypeptide: Transcription antitermination protein NusB (165 aa).

Belongs to the NusB family.

Functionally, involved in transcription antitermination. Required for transcription of ribosomal RNA (rRNA) genes. Binds specifically to the boxA antiterminator sequence of the ribosomal RNA (rrn) operons. This is Transcription antitermination protein NusB from Nitratidesulfovibrio vulgaris (strain DSM 19637 / Miyazaki F) (Desulfovibrio vulgaris).